Here is an 88-residue protein sequence, read N- to C-terminus: FXYD domain-containing ion transport regulator 3 (88 aa).

Residues 1–20 (MQEVVLSLLVLLAGLPTLDA) constitute a signal peptide (not cleaved). The Extracellular segment spans residues 1-38 (MQEVVLSLLVLLAGLPTLDANDPENKNDPFYYDWYSLR). The helical transmembrane segment at 39–59 (VGGLICAGILCALGIIVLMSG) threads the bilayer. Over 60–88 (KCKCKFRQKPSHRPGEGPPLITPGSAHNC) the chain is Cytoplasmic. The interval 67–88 (QKPSHRPGEGPPLITPGSAHNC) is disordered.

Belongs to the FXYD family. In terms of assembly, regulatory subunit of the sodium/potassium-transporting ATPase which is composed of a catalytic alpha subunit, a non-catalytic beta subunit and an additional regulatory subunit. Interacts with catalytic alpha subunit ATP1A1. Also interacts with non-catalytic beta subunit ATP1B1. Interacts with the ATP1A1-ATP1B1, ATP1A2-ATP1B1 and ATP1A3-ATP1B1 NKA isozymes. Glutathionylated. Expressed at high levels in heart, skeletal muscle and liver with low levels of expression in breast, brain, lung, stomach and colon. In the gastric gland, mainly expressed in the mucus cells forming the upper part of the gland and is absent from the parietal cells.

It localises to the cell membrane. Functionally, associates with and regulates the activity of the sodium/potassium-transporting ATPase (NKA) which transports Na(+) out of the cell and K(+) into the cell. Reduces glutathionylation of the NKA beta-1 subunit ATP1B1, thus reversing glutathionylation-mediated inhibition of ATP1B1. Induces a hyperpolarization-activated chloride current when expressed in Xenopus oocytes. The protein is FXYD domain-containing ion transport regulator 3 (Fxyd3) of Mus musculus (Mouse).